A 280-amino-acid chain; its full sequence is Bifunctional protein FolD (280 aa).

NADP(+) contacts are provided by residues 159-161 (GRS), serine 184, and isoleucine 225.

It belongs to the tetrahydrofolate dehydrogenase/cyclohydrolase family. As to quaternary structure, homodimer.

It catalyses the reaction (6R)-5,10-methylene-5,6,7,8-tetrahydrofolate + NADP(+) = (6R)-5,10-methenyltetrahydrofolate + NADPH. It carries out the reaction (6R)-5,10-methenyltetrahydrofolate + H2O = (6R)-10-formyltetrahydrofolate + H(+). It participates in one-carbon metabolism; tetrahydrofolate interconversion. In terms of biological role, catalyzes the oxidation of 5,10-methylenetetrahydrofolate to 5,10-methenyltetrahydrofolate and then the hydrolysis of 5,10-methenyltetrahydrofolate to 10-formyltetrahydrofolate. The sequence is that of Bifunctional protein FolD from Methanosphaerula palustris (strain ATCC BAA-1556 / DSM 19958 / E1-9c).